The chain runs to 378 residues: UDP-N-acetylglucosamine--N-acetylmuramyl-(pentapeptide) pyrophosphoryl-undecaprenol N-acetylglucosamine transferase (378 aa).

Residues 24 to 26 (TAG), N144, R181, S215, and Q310 each bind UDP-N-acetyl-alpha-D-glucosamine.

It belongs to the glycosyltransferase 28 family. MurG subfamily.

Its subcellular location is the cell membrane. It catalyses the reaction di-trans,octa-cis-undecaprenyl diphospho-N-acetyl-alpha-D-muramoyl-L-alanyl-D-glutamyl-meso-2,6-diaminopimeloyl-D-alanyl-D-alanine + UDP-N-acetyl-alpha-D-glucosamine = di-trans,octa-cis-undecaprenyl diphospho-[N-acetyl-alpha-D-glucosaminyl-(1-&gt;4)]-N-acetyl-alpha-D-muramoyl-L-alanyl-D-glutamyl-meso-2,6-diaminopimeloyl-D-alanyl-D-alanine + UDP + H(+). It functions in the pathway cell wall biogenesis; peptidoglycan biosynthesis. Its function is as follows. Cell wall formation. Catalyzes the transfer of a GlcNAc subunit on undecaprenyl-pyrophosphoryl-MurNAc-pentapeptide (lipid intermediate I) to form undecaprenyl-pyrophosphoryl-MurNAc-(pentapeptide)GlcNAc (lipid intermediate II). The protein is UDP-N-acetylglucosamine--N-acetylmuramyl-(pentapeptide) pyrophosphoryl-undecaprenol N-acetylglucosamine transferase of Nocardia farcinica (strain IFM 10152).